Here is a 339-residue protein sequence, read N- to C-terminus: Spore coat polysaccharide biosynthesis protein SpsG (339 aa).

Residues 241–261 (IVAGGISLYEAICIGVPCLVL) traverse the membrane as a helical segment.

The protein to M.jannaschii MJ1062.

The protein resides in the cell membrane. Its pathway is spore coat biogenesis; spore coat polysaccharide biosynthesis. This chain is Spore coat polysaccharide biosynthesis protein SpsG (spsG), found in Bacillus subtilis (strain 168).